Reading from the N-terminus, the 323-residue chain is Mas-related G-protein coupled receptor member X1 (323 aa).

Over 1–30 (MDPTISSLSTESTTLNKTGHPSCRPILTLS) the chain is Extracellular. The N-linked (GlcNAc...) asparagine glycan is linked to asparagine 16. The chain crosses the membrane as a helical span at residues 31 to 51 (FLVPIITLLGLAGNTIVLWLL). The Cytoplasmic segment spans residues 52–59 (GFRMRRKA). A helical membrane pass occupies residues 60–80 (ISVYVLNLSLADSFFLCCHFI). At 81–100 (DSLMRIMNFYGIYAHKLSKE) the chain is on the extracellular side. Residues 101–121 (ILGNAAIIPYISGLSILSAIS) form a helical membrane-spanning segment. Over 122–143 (TERCLSVLWPIWYHCHRPRNMS) the chain is Cytoplasmic. Residues 144 to 164 (AIICVLIWVLSFLMGILDWFF) form a helical membrane-spanning segment. Residues 165–180 (SGFLGETHHHLWKNVD) are Extracellular-facing. Residues 181-201 (FIVTAFLIFLFMLLFGSSLAL) form a helical membrane-spanning segment. Topologically, residues 202-226 (LVRILCGSRRKPLSRLYVTISLTVM) are cytoplasmic. Residues 227-247 (VYLICGLPLGLYLFLLYWFGI) form a helical membrane-spanning segment. The Extracellular segment spans residues 248 to 258 (HLHYPFCHIYQ). The helical transmembrane segment at 259–279 (VTVLLSCVNSSANPIIYFLVG) threads the bilayer. Over 280–323 (SFRHRKKHRSLKMVLKRALEETPEEDEYTDSHVQKPTEISERRC) the chain is Cytoplasmic.

This sequence belongs to the G-protein coupled receptor 1 family. Mas subfamily. Uniquely localized in a subset of small dorsal root and trigeminal sensory neurons. Associated preferentially with IB4 class of small-diameter somatosensory afferents (also known as nociceptors).

It localises to the cell membrane. Orphan receptor activated by neuropeptides terminating in Arg-Phe or Arg-Phe-amide. Mediates its action by association with G proteins that activate a phosphatidylinositol-calcium second messenger system. Its effect is mediated by G(q) and G(11) proteins. May regulate the function of nociceptive neurons by modulation of pain perception. The chain is Mas-related G-protein coupled receptor member X1 (Mrgprx1) from Rattus norvegicus (Rat).